The chain runs to 242 residues: Glutamine transport ATP-binding protein GlnQ (242 aa).

The ABC transporter domain occupies 2–236; sequence IYFHQVNKYY…PKEERAKVFL (235 aa). ATP is bound at residue 34–41; sequence GPSGSGKS.

The protein belongs to the ABC transporter superfamily.

It localises to the cell membrane. Functionally, part of the binding-protein-dependent transport system for glutamine. Probably responsible for energy coupling to the transport system. The sequence is that of Glutamine transport ATP-binding protein GlnQ (glnQ) from Geobacillus stearothermophilus (Bacillus stearothermophilus).